The sequence spans 70 residues: Spore germination protein-like protein YpzD (70 aa).

This sequence belongs to the GerPA/GerPF family.

The sequence is that of Spore germination protein-like protein YpzD (ypzD) from Bacillus subtilis (strain 168).